Here is a 292-residue protein sequence, read N- to C-terminus: Elongation factor Ts (292 aa).

An involved in Mg(2+) ion dislocation from EF-Tu region spans residues 82-85 (TDFV).

Belongs to the EF-Ts family.

Its subcellular location is the cytoplasm. Functionally, associates with the EF-Tu.GDP complex and induces the exchange of GDP to GTP. It remains bound to the aminoacyl-tRNA.EF-Tu.GTP complex up to the GTP hydrolysis stage on the ribosome. The sequence is that of Elongation factor Ts from Bordetella avium (strain 197N).